The chain runs to 133 residues: MPYVYANAKALQDTEKVGNHHQCVELIQHYIRVGQASTWQQGAAVFGNKNIEVGTVIATFVNGRYPNHNSGNHAAFFLGQDTGGIWVMDQWKDDIAKPRVSKRYIRKLHNGSVRSDGTYIRMSNNAEAYFIVE.

Catalysis depends on residues Cys-23 and His-73.

The protein belongs to the cell wall amidase Dae2/Tae2-like family.

Its subcellular location is the host periplasm. It is found in the secreted. The protein operates within cell wall degradation; peptidoglycan degradation. In terms of biological role, toxic component of a contact-dependent interbacterial competition system (also called effector-immunity systems). Secreted by the SPI-6 type VI secretion system, probably into the periplasm of bacterial target cells. A cell wall amidase with specificity toward the D-meso-DAP-D-alanine bond (D-meso-diaminopimelic-D-alanine) found in peptidoglycan of Gram-negative bacteria. Toxicity is counteracted by a cognate immunity protein Tai2 (t2585), but not immunity proteins associated with a similar endopeptidase in other bacteria. In vitro degrades peptidoglycans from Gram-negative but not Gram-positive bacteria. The protein is Type VI secretion amidase effector 2 protein of Salmonella typhi.